Here is a 144-residue protein sequence, read N- to C-terminus: Large ribosomal subunit protein uL15 (144 aa).

A disordered region spans residues 1 to 48 (MIKLEYLQDPSPRKRRTKLLGRGPSSGHGKTSGRGHKGDGSRSGYKRR).

The protein belongs to the universal ribosomal protein uL15 family. Part of the 50S ribosomal subunit.

In terms of biological role, binds to the 23S rRNA. The polypeptide is Large ribosomal subunit protein uL15 (Chlamydia muridarum (strain MoPn / Nigg)).